We begin with the raw amino-acid sequence, 397 residues long: Ethanolaminephosphotransferase 1 (397 aa).

An N-acetylalanine modification is found at alanine 2. Transmembrane regions (helical) follow at residues 47–69, 84–103, 123–145, 150–172, 179–201, 221–243, 256–278, 291–310, 317–339, and 344–366; these read WLAP…LLMA, HVPD…AYTL, LFDH…SIFG, GVSV…LSHW, ILFL…IVTA, LFTA…LNFF, VYEA…AWIL, VFYF…LIVC, CPTL…LGVA, and SILL…VRVV. Selenocysteine 387 is a non-standard amino acid (selenocysteine).

This sequence belongs to the CDP-alcohol phosphatidyltransferase class-I family. Mg(2+) is required as a cofactor. Requires Mn(2+) as cofactor. As to expression, widely expressed. Abundant in brain, placenta, liver and pancreas, followed by heart, skeletal muscle, lung and kidney. In brain it is strongly expressed in cerebellum, followed by the occipital pole and the frontal lobe.

The protein resides in the endoplasmic reticulum membrane. It carries out the reaction CDP-ethanolamine + a 1,2-diacyl-sn-glycerol = a 1,2-diacyl-sn-glycero-3-phosphoethanolamine + CMP + H(+). The enzyme catalyses 1-O-alkyl-2-acyl-sn-glycerol + CDP-ethanolamine = a 1-O-alkyl-2-acyl-sn-glycero-3-phosphoethanolamine + CMP + H(+). It participates in phospholipid metabolism; phosphatidylethanolamine biosynthesis; phosphatidylethanolamine from ethanolamine: step 3/3. In terms of biological role, ethanolaminephosphotransferase that catalyzes the transfer of phosphoethanolamine (PE) from CDP-ethanolamine to lipid acceptors, the final step in the synthesis of PE via the 'Kennedy' pathway. PE is the second most abundant phospholipid of membranes in mammals and is involved in various membrane-related cellular processes. The enzyme is critical for the synthesis of several PE species and also catalyzes the synthesis of plasmanyl-PE, a lipid required for proper myelination and neurodevelopment, from 1-alkyl-2-acylglycerol. This chain is Ethanolaminephosphotransferase 1, found in Homo sapiens (Human).